Consider the following 245-residue polypeptide: Polyhedrin (245 aa).

Belongs to the polyhedrin family.

Major component of the virus occlusion bodies, which are large proteinaceous structures (polyhedra), that protect the virus from the outside environment for extended periods until they are ingested by insect larvae. The polypeptide is Polyhedrin (PH) (Lepidoptera (butterflies and moths)).